A 193-amino-acid chain; its full sequence is V-type sodium ATPase subunit E (193 aa).

It belongs to the V-ATPase E subunit family. The N-terminus is blocked.

Functionally, involved in ATP-driven sodium extrusion. The protein is V-type sodium ATPase subunit E (ntpE) of Enterococcus hirae (strain ATCC 9790 / DSM 20160 / JCM 8729 / LMG 6399 / NBRC 3181 / NCIMB 6459 / NCDO 1258 / NCTC 12367 / WDCM 00089 / R).